The primary structure comprises 164 residues: DNA-directed RNA polymerase 19 kDa subunit (164 aa).

The span at 1 to 35 shows a compositional bias: acidic residues; the sequence is MADTDDIIDYESDDLTEYEDDDEEEEDGESLETSD. Residues 1-39 form a disordered region; sequence MADTDDIIDYESDDLTEYEDDDEEEEDGESLETSDIDPK.

It belongs to the poxviridae DNA-directed RNA polymerase 19 kDa subunit family. In terms of assembly, the DNA-dependent RNA polymerase used for intermediate and late genes expression consists of eight subunits Rpo30/OPG66, Rpo7/OPG90, Rpo22/OPG103, Rpo147/OPG105, Rpo18/OPG119, Rpo19/OPG131, Rpo132/OPG151 and Rpo35/OPG156. The same holoenzyme, with the addition of the transcription-specificity factor OPG109, is used for early gene expression.

The protein resides in the virion. The catalysed reaction is RNA(n) + a ribonucleoside 5'-triphosphate = RNA(n+1) + diphosphate. Functionally, part of the DNA-dependent RNA polymerase which catalyzes the transcription of viral DNA into RNA using the four ribonucleoside triphosphates as substrates. Responsible for the transcription of early, intermediate and late genes. DNA-dependent RNA polymerase associates with the early transcription factor (ETF), itself composed of OPG118 and OPG133, thereby allowing the early genes transcription. Late transcription, and probably also intermediate transcription, require newly synthesized RNA polymerase. The protein is DNA-directed RNA polymerase 19 kDa subunit (OPG131) of Variola virus (isolate Human/India/Ind3/1967) (VARV).